The primary structure comprises 907 residues: DNA ligase 4 (907 aa).

Positions 273, 275, 280, 333, 378, 438, 443, 460, and 462 each coordinate ATP. The active-site N6-AMP-lysine intermediate is K275. A Mg(2+)-binding site is contributed by E333. E438 contacts Mg(2+). BRCT domains are found at residues 655–754 and 800–906; these read PVSN…ESDI and VPLF…HYQC.

The protein belongs to the ATP-dependent DNA ligase family. Mg(2+) serves as cofactor.

It is found in the nucleus. It catalyses the reaction ATP + (deoxyribonucleotide)n-3'-hydroxyl + 5'-phospho-(deoxyribonucleotide)m = (deoxyribonucleotide)n+m + AMP + diphosphate.. DNA ligase involved in DNA non-homologous end joining (NHEJ); required for double-strand break (DSB) repair. The protein is DNA ligase 4 (LIG4) of Kluyveromyces lactis (strain ATCC 8585 / CBS 2359 / DSM 70799 / NBRC 1267 / NRRL Y-1140 / WM37) (Yeast).